The following is a 484-amino-acid chain: NADH-quinone oxidoreductase subunit N (484 aa).

A run of 13 helical transmembrane segments spans residues 10–30, 40–60, 74–94, 108–128, 129–149, 163–183, 203–223, 237–257, 272–292, 299–319, 327–347, 370–390, and 404–424; these read LALPEIWLLAATCGVLVVDLF, FYLTQGALLVTAVLALSTQWG, SLGAVVKASVALLSVLALAYT, FYLLALFANLGMLVIASGGSL, LSLYLGLELLSLALYALVAYH, FVLGSLASGILLYGMSMVYGA, LMLLFGVVFMLVGVAFKLGAA, PTPVTLFLSTAPKVAAVALFM, EPMLMILAVASLLVGNLIAIV, MLAYSAIAHAGFIMVGFTAGT, LFYTIAYSIMAAGAFGMITVL, YAGVLLLVLVSMTGIPGTVGF, and GHIPLAIFAVVAAVVGAFYYL.

Belongs to the complex I subunit 2 family. NDH-1 is composed of 14 different subunits. Subunits NuoA, H, J, K, L, M, N constitute the membrane sector of the complex.

The protein localises to the cell inner membrane. The catalysed reaction is a quinone + NADH + 5 H(+)(in) = a quinol + NAD(+) + 4 H(+)(out). Functionally, NDH-1 shuttles electrons from NADH, via FMN and iron-sulfur (Fe-S) centers, to quinones in the respiratory chain. The immediate electron acceptor for the enzyme in this species is believed to be ubiquinone. Couples the redox reaction to proton translocation (for every two electrons transferred, four hydrogen ions are translocated across the cytoplasmic membrane), and thus conserves the redox energy in a proton gradient. The protein is NADH-quinone oxidoreductase subunit N of Halorhodospira halophila (strain DSM 244 / SL1) (Ectothiorhodospira halophila (strain DSM 244 / SL1)).